A 242-amino-acid polypeptide reads, in one-letter code: Probable transcriptional regulatory protein LBA0733 (242 aa).

Residues 1 to 22 (MSGHSKWHNIQGRKNAQDAKRG) form a disordered region.

This sequence belongs to the TACO1 family.

It is found in the cytoplasm. In Lactobacillus acidophilus (strain ATCC 700396 / NCK56 / N2 / NCFM), this protein is Probable transcriptional regulatory protein LBA0733.